The sequence spans 131 residues: Tegument protein ORF52 (131 aa).

Positions 103 to 131 (SDGGTAKPPPGANNRRRRGASTTRAGVDD) are disordered. Residues 122-131 (ASTTRAGVDD) are compositionally biased toward low complexity. Ser123 carries the phosphoserine; by host modification.

This sequence belongs to the herpesviridae BLRF2 family. Homooligomer; homooligomerizes and binds double-stranded DNA (dsDNA) cooperatively. Interacts with host CGAS. Interacts with PQBP1.

The protein resides in the host cytoplasm. The protein localises to the virion tegument. Plays a role in the inhibition of host innate immune system by targeting the CGAS enzymatic activity which is the principal cytosolic DNA sensor that detects invading viral DNA. Acts by inhibiting CGAS-DNA phase separation: directly binds double-stranded DNA (dsDNA) in a length dependent but sequence independent manner and is able to form DNA-induced phase separation in infected cells. DNA phase separation of ORF52 mediates disruption of liquid-like droplets in which CGAS is activated, thereby preventing CGAS activity. Targets also the HDP-RNP complex composed of DNA-PK subunits and paraspeckle proteins. This complex is a key nuclear regulator of DNA-mediated activation of innate immune response through the cGAS-STING pathway. In Homo sapiens (Human), this protein is Tegument protein ORF52.